We begin with the raw amino-acid sequence, 453 residues long: Acyl-coenzyme A thioesterase 2, mitochondrial (453 aa).

The N-terminal 42 residues, 1–42, are a transit peptide targeting the mitochondrion; the sequence is MVASSFAVLRASRLCQQDWKSWARLFVPPPLSTGGRTTWART. K83 is modified (N6-acetyllysine). Catalysis depends on charge relay system residues S273, D365, and H399. The residue at position 447 (K447) is an N6-succinyllysine.

This sequence belongs to the C/M/P thioester hydrolase family. As to quaternary structure, monomer. In terms of tissue distribution, highly expressed in brown and white adipose tissue, muscle, heart, kidney, lung, adrenal gland and spleen; weakly expressed in intestine, testis and brain.

Its subcellular location is the mitochondrion matrix. It carries out the reaction hexadecanoyl-CoA + H2O = hexadecanoate + CoA + H(+). The catalysed reaction is tetradecanoyl-CoA + H2O = tetradecanoate + CoA + H(+). The enzyme catalyses octadecanoyl-CoA + H2O = octadecanoate + CoA + H(+). It catalyses the reaction eicosanoyl-CoA + H2O = eicosanoate + CoA + H(+). It carries out the reaction decanoyl-CoA + H2O = decanoate + CoA + H(+). The catalysed reaction is dodecanoyl-CoA + H2O = dodecanoate + CoA + H(+). The enzyme catalyses (9Z)-octadecenoyl-CoA + H2O = (9Z)-octadecenoate + CoA + H(+). It catalyses the reaction (9Z)-hexadecenoyl-CoA + H2O = (9Z)-hexadecenoate + CoA + H(+). It carries out the reaction (9E)-octadecenoyl-CoA + H2O = (9E)-octadecenoate + CoA + H(+). The catalysed reaction is (9Z,12Z)-octadecadienoyl-CoA + H2O = (9Z,12Z)-octadecadienoate + CoA + H(+). It participates in lipid metabolism; fatty acid metabolism. In terms of biological role, catalyzes the hydrolysis of acyl-CoAs into free fatty acids and coenzyme A (CoASH), regulating their respective intracellular levels. Displays higher activity toward long chain acyl CoAs (C14-C20). The enzyme is involved in enhancing the hepatic fatty acid oxidation in mitochondria. The sequence is that of Acyl-coenzyme A thioesterase 2, mitochondrial (Acot2) from Mus musculus (Mouse).